We begin with the raw amino-acid sequence, 558 residues long: Glucose-6-phosphate isomerase (558 aa).

Catalysis depends on Glu362, which acts as the Proton donor. Active-site residues include His393 and Lys523.

This sequence belongs to the GPI family.

It localises to the cytoplasm. The catalysed reaction is alpha-D-glucose 6-phosphate = beta-D-fructose 6-phosphate. It participates in carbohydrate degradation; glycolysis; D-glyceraldehyde 3-phosphate and glycerone phosphate from D-glucose: step 2/4. The sequence is that of Glucose-6-phosphate isomerase (Pgi) from Drosophila yakuba (Fruit fly).